A 208-amino-acid chain; its full sequence is FMN-dependent NADH:quinone oxidoreductase 4 (208 aa).

It belongs to the azoreductase type 1 family. In terms of assembly, homodimer. FMN serves as cofactor.

It catalyses the reaction 2 a quinone + NADH + H(+) = 2 a 1,4-benzosemiquinone + NAD(+). The enzyme catalyses N,N-dimethyl-1,4-phenylenediamine + anthranilate + 2 NAD(+) = 2-(4-dimethylaminophenyl)diazenylbenzoate + 2 NADH + 2 H(+). Quinone reductase that provides resistance to thiol-specific stress caused by electrophilic quinones. In terms of biological role, also exhibits azoreductase activity. Catalyzes the reductive cleavage of the azo bond in aromatic azo compounds to the corresponding amines. The protein is FMN-dependent NADH:quinone oxidoreductase 4 of Bacillus cereus (strain ZK / E33L).